The sequence spans 197 residues: Potassium-transporting ATPase KdpC subunit (197 aa).

A helical membrane pass occupies residues 7–27 (PAFISLILFTLLFGLIYPLTV).

It belongs to the KdpC family. As to quaternary structure, the system is composed of three essential subunits: KdpA, KdpB and KdpC.

Its subcellular location is the cell inner membrane. Its function is as follows. Part of the high-affinity ATP-driven potassium transport (or Kdp) system, which catalyzes the hydrolysis of ATP coupled with the electrogenic transport of potassium into the cytoplasm. This subunit acts as a catalytic chaperone that increases the ATP-binding affinity of the ATP-hydrolyzing subunit KdpB by the formation of a transient KdpB/KdpC/ATP ternary complex. The chain is Potassium-transporting ATPase KdpC subunit from Beijerinckia indica subsp. indica (strain ATCC 9039 / DSM 1715 / NCIMB 8712).